The following is a 223-amino-acid chain: Cytidylate kinase (223 aa).

10–18 (GPAGAGKST) lines the ATP pocket.

The protein belongs to the cytidylate kinase family. Type 1 subfamily.

It is found in the cytoplasm. It catalyses the reaction CMP + ATP = CDP + ADP. The enzyme catalyses dCMP + ATP = dCDP + ADP. The polypeptide is Cytidylate kinase (Exiguobacterium sibiricum (strain DSM 17290 / CCUG 55495 / CIP 109462 / JCM 13490 / 255-15)).